The primary structure comprises 503 residues: 2-(3-amino-3-carboxypropyl)histidine synthase subunit 2 (503 aa).

3 residues coordinate [4Fe-4S] cluster: cysteine 93, cysteine 114, and cysteine 334. The disordered stretch occupies residues 464 to 503 (GLDSVDEGEGPSKLYEGQSGIAKGYVGEGSKEKIQRDFGK). Positions 492–503 (GSKEKIQRDFGK) are enriched in basic and acidic residues.

Belongs to the DPH1/DPH2 family. DPH2 subfamily. As to quaternary structure, component of the 2-(3-amino-3-carboxypropyl)histidine synthase complex composed of dph1, dph2, dph3 and a NADH-dependent reductase, predominantly cbr1. The cofactor is [4Fe-4S] cluster.

The protein localises to the cytoplasm. The protein operates within protein modification; peptidyl-diphthamide biosynthesis. Its function is as follows. Required for the first step of diphthamide biosynthesis, a post-translational modification of histidine which occurs in elongation factor 2. Dph1 and dph2 transfer a 3-amino-3-carboxypropyl (ACP) group from S-adenosyl-L-methionine (SAM) to a histidine residue, the reaction is assisted by a reduction system comprising dph3 and a NADH-dependent reductase, predominantly cbr1. Facilitates the reduction of the catalytic iron-sulfur cluster found in the dph1 subunit. The polypeptide is 2-(3-amino-3-carboxypropyl)histidine synthase subunit 2 (Schizosaccharomyces pombe (strain 972 / ATCC 24843) (Fission yeast)).